The primary structure comprises 414 residues: Serine hydroxymethyltransferase (414 aa).

Residues Leu116 and Gly120–Leu122 contribute to the (6S)-5,6,7,8-tetrahydrofolate site. Position 224 is an N6-(pyridoxal phosphate)lysine (Lys224). Residues Glu240 and Ser348–Phe350 contribute to the (6S)-5,6,7,8-tetrahydrofolate site.

Belongs to the SHMT family. Homodimer. Pyridoxal 5'-phosphate serves as cofactor.

It localises to the cytoplasm. It carries out the reaction (6R)-5,10-methylene-5,6,7,8-tetrahydrofolate + glycine + H2O = (6S)-5,6,7,8-tetrahydrofolate + L-serine. It participates in one-carbon metabolism; tetrahydrofolate interconversion. It functions in the pathway amino-acid biosynthesis; glycine biosynthesis; glycine from L-serine: step 1/1. Its function is as follows. Catalyzes the reversible interconversion of serine and glycine with tetrahydrofolate (THF) serving as the one-carbon carrier. This reaction serves as the major source of one-carbon groups required for the biosynthesis of purines, thymidylate, methionine, and other important biomolecules. Also exhibits THF-independent aldolase activity toward beta-hydroxyamino acids, producing glycine and aldehydes, via a retro-aldol mechanism. This is Serine hydroxymethyltransferase from Campylobacter jejuni (strain RM1221).